The primary structure comprises 340 residues: Extracellular matrix protein-binding protein emp (340 aa).

The first 26 residues, Met-1–Ala-26, serve as a signal peptide directing secretion.

Its subcellular location is the cell surface. In terms of biological role, adhesin that binds to the host cell extracellular matrix proteins fibronectin, fibrinogen, collagen, and vitronectin. The chain is Extracellular matrix protein-binding protein emp (emp) from Staphylococcus aureus.